Consider the following 471-residue polypeptide: Protoheme IX farnesyltransferase, mitochondrial (471 aa).

Residues 1–60 (MLLSNVAVNRTVVHTQLVSGSRSALHALSRTSHSVPVTHTHQRRHIFSHKRRLSSSTLAI) constitute a mitochondrion transit peptide. Helical transmembrane passes span 188 to 208 (AVSL…SGSA), 247 to 267 (ITGT…VAIL), 287 to 307 (IINT…GWAA), 312 to 332 (LLHP…FPHF), 368 to 388 (LLMF…WWFV), and 430 to 450 (KLFW…MIHK).

The protein belongs to the UbiA prenyltransferase family.

The protein localises to the mitochondrion membrane. It catalyses the reaction heme b + (2E,6E)-farnesyl diphosphate + H2O = Fe(II)-heme o + diphosphate. Functionally, converts protoheme IX and farnesyl diphosphate to heme O. The polypeptide is Protoheme IX farnesyltransferase, mitochondrial (COX10) (Yarrowia lipolytica (strain CLIB 122 / E 150) (Yeast)).